The following is a 226-amino-acid chain: Ribonuclease 3 (226 aa).

Positions 7-129 (LPRLCRTLGY…IIGAVYLDAD (123 aa)) constitute an RNase III domain. E42 serves as a coordination point for Mg(2+). D46 is an active-site residue. The Mg(2+) site is built by D115 and E118. Residue E118 is part of the active site. The DRBM domain occupies 156 to 226 (DPKTILQEYL…AAQVLELLNK (71 aa)).

The protein belongs to the ribonuclease III family. Homodimer. Mg(2+) is required as a cofactor.

It localises to the cytoplasm. It catalyses the reaction Endonucleolytic cleavage to 5'-phosphomonoester.. In terms of biological role, digests double-stranded RNA. Involved in the processing of primary rRNA transcript to yield the immediate precursors to the large and small rRNAs (23S and 16S). Processes some mRNAs, and tRNAs when they are encoded in the rRNA operon. Processes pre-crRNA and tracrRNA of type II CRISPR loci if present in the organism. This Shewanella frigidimarina (strain NCIMB 400) protein is Ribonuclease 3.